A 614-amino-acid polypeptide reads, in one-letter code: UvrABC system protein C (614 aa).

A GIY-YIG domain is found at N26–V104. A UVR domain is found at S215–V250.

This sequence belongs to the UvrC family. Interacts with UvrB in an incision complex.

Its subcellular location is the cytoplasm. The UvrABC repair system catalyzes the recognition and processing of DNA lesions. UvrC both incises the 5' and 3' sides of the lesion. The N-terminal half is responsible for the 3' incision and the C-terminal half is responsible for the 5' incision. The polypeptide is UvrABC system protein C (Psychrobacter cryohalolentis (strain ATCC BAA-1226 / DSM 17306 / VKM B-2378 / K5)).